The sequence spans 482 residues: Protein farnesyltransferase subunit beta (482 aa).

PFTB repeat units lie at residues 131 to 172 (ESNA…VTLG), 182 to 223 (REKM…SILN), 230 to 271 (TQGL…ILIN), and 278 to 319 (LDSL…VLLQ). (2E,6E)-farnesyl diphosphate contacts are provided by residues 256–259 (HGGY) and 298–301 (RTNK). 2 residues coordinate Zn(2+): Asp304 and Cys306. Position 307–310 (307–310 (YTFW)) interacts with (2E,6E)-farnesyl diphosphate. The disordered stretch occupies residues 329–372 (VHGSSHISEGTNEEHHAHDEDDLEDSDDDDDSDEDNDEDSVNGH). Positions 348–368 (EDDLEDSDDDDDSDEDNDEDS) are enriched in acidic residues. The stretch at 391–433 (SLGLQRYVLLCSKIPDGGFRDKPRKPRDFYHTCYCLSGLSVAQ) is one PFTB 5 repeat. His421 lines the Zn(2+) pocket.

It belongs to the protein prenyltransferase subunit beta family. Heterodimer of FTA and FTB (farnesyltransferase). Heterodimer of an alpha and a beta subunit. It depends on Zn(2+) as a cofactor.

The catalysed reaction is L-cysteinyl-[protein] + (2E,6E)-farnesyl diphosphate = S-(2E,6E)-farnesyl-L-cysteinyl-[protein] + diphosphate. Functionally, catalyzes the transfer of a farnesyl moiety from farnesyl diphosphate to a cysteine at the fourth position from the C-terminus of several proteins having the C-terminal sequence Cys-aliphatic-aliphatic-X (CaaX). The beta subunit is responsible for peptide-binding. Acts as an abscisic acid (ABA) negative regulator by mediating ASG2 farnesylation and consequently monitoring its subcellular localization. Involved in responses to salt (NaCl) and osmotic (e.g. in response to mannitol and PEG) stresses. This is Protein farnesyltransferase subunit beta (FTB) from Arabidopsis thaliana (Mouse-ear cress).